The primary structure comprises 104 residues: Chromogranin-A (104 aa).

C17 and C38 are disulfide-bonded.

This sequence belongs to the chromogranin/secretogranin protein family. In terms of assembly, dimer.

It localises to the cytoplasmic vesicle. The protein localises to the secretory vesicle. Its subcellular location is the secreted. Chromogranin A probably has a paracrine role in the regulation of secretion or maturation. The protein is Chromogranin-A (CHGA) of Struthio camelus (Common ostrich).